The sequence spans 600 residues: UvrABC system protein C (600 aa).

A GIY-YIG domain is found at 15–92 (EKAGCYLMKD…IKKYQPYYNV (78 aa)). The UVR domain maps to 197 to 232 (QEVKKDLTNKMLQASADLEFERAGELRDQLKYIEET).

This sequence belongs to the UvrC family. In terms of assembly, interacts with UvrB in an incision complex.

Its subcellular location is the cytoplasm. Its function is as follows. The UvrABC repair system catalyzes the recognition and processing of DNA lesions. UvrC both incises the 5' and 3' sides of the lesion. The N-terminal half is responsible for the 3' incision and the C-terminal half is responsible for the 5' incision. The polypeptide is UvrABC system protein C (Lactobacillus delbrueckii subsp. bulgaricus (strain ATCC BAA-365 / Lb-18)).